The chain runs to 285 residues: 2-dehydro-3-deoxyphosphooctonate aldolase (285 aa).

The protein belongs to the KdsA family.

It localises to the cytoplasm. The catalysed reaction is D-arabinose 5-phosphate + phosphoenolpyruvate + H2O = 3-deoxy-alpha-D-manno-2-octulosonate-8-phosphate + phosphate. It participates in carbohydrate biosynthesis; 3-deoxy-D-manno-octulosonate biosynthesis; 3-deoxy-D-manno-octulosonate from D-ribulose 5-phosphate: step 2/3. The protein operates within bacterial outer membrane biogenesis; lipopolysaccharide biosynthesis. This Bordetella parapertussis (strain 12822 / ATCC BAA-587 / NCTC 13253) protein is 2-dehydro-3-deoxyphosphooctonate aldolase.